A 155-amino-acid chain; its full sequence is SsrA-binding protein (155 aa).

This sequence belongs to the SmpB family.

It localises to the cytoplasm. Functionally, required for rescue of stalled ribosomes mediated by trans-translation. Binds to transfer-messenger RNA (tmRNA), required for stable association of tmRNA with ribosomes. tmRNA and SmpB together mimic tRNA shape, replacing the anticodon stem-loop with SmpB. tmRNA is encoded by the ssrA gene; the 2 termini fold to resemble tRNA(Ala) and it encodes a 'tag peptide', a short internal open reading frame. During trans-translation Ala-aminoacylated tmRNA acts like a tRNA, entering the A-site of stalled ribosomes, displacing the stalled mRNA. The ribosome then switches to translate the ORF on the tmRNA; the nascent peptide is terminated with the 'tag peptide' encoded by the tmRNA and targeted for degradation. The ribosome is freed to recommence translation, which seems to be the essential function of trans-translation. The protein is SsrA-binding protein of Bacillus cereus (strain B4264).